The sequence spans 64 residues: Movement protein TGBp3 (64 aa).

The Lumenal portion of the chain corresponds to 1-7 (MSLSYLD). A helical transmembrane segment spans residues 8 to 28 (LLLAFGCVLAVSVIVNCFLVS). Over 29 to 64 (HNNCVIEITGEAVRISGCTFDRTFVELVKGLKPARH) the chain is Cytoplasmic.

Belongs to the Tymovirales TGBp3 protein family.

The protein resides in the host endoplasmic reticulum membrane. Its function is as follows. Plays a role in viral cell-to-cell propagation, by facilitating genome transport to neighboring plant cells through plasmosdesmata. May induce the formation of granular vesicles derived from the Endoplasmic reticulum, which align on actin filaments. The sequence is that of Movement protein TGBp3 from Chrysanthemum morifolium (Florist's daisy).